The chain runs to 587 residues: Nucleoporin ndc-1 (587 aa).

Residues 1-79 lie on the Cytoplasmic side of the membrane; the sequence is MMGENSSAYT…FHSEIDVRKK (79 aa). The segment at 32–55 is disordered; it reads ASTSATSSPNLRKSPNRGFSSPRA. The chain crosses the membrane as a helical span at residues 80–100; it reads LASFVCGAAVALSFIVTVSIL. The Perinuclear space portion of the chain corresponds to 101–121; the sequence is KLSIWAPFSSVQDSLTWWLYP. A helical membrane pass occupies residues 122–142; that stretch reads TSWPVTLFIWLSSVAWTFLII. At 143–161 the chain is on the cytoplasmic side; that stretch reads HQFCTVTQVPRIPITDTYA. The chain crosses the membrane as a helical span at residues 162-182; sequence WAGAALEFVHRLIFVYTAFTV. Topologically, residues 183 to 187 are perinuclear space; the sequence is SESSF. Residues 188 to 208 traverse the membrane as a helical segment; it reads FEDFAWIAIAFSVAISSALVI. Topologically, residues 209-255 are cytoplasmic; the sequence is FRSDFHLNFSNVQVNSFKTLIDFAKSLPYGSLAETSGVDAAIAYTAA. Residues 256–276 traverse the membrane as a helical segment; the sequence is MALTVFGSPLLWGFSAWWLLI. At 277–281 the chain is on the perinuclear space side; the sequence is NIQFH. A helical transmembrane segment spans residues 282 to 302; sequence LVLFGVCFAQQFFAKIFMKIV. Residues 303–587 are Cytoplasmic-facing; that stretch reads NQIVMKPMKF…TIKLVCAEEI (285 aa).

It belongs to the NDC1 family.

The protein resides in the nucleus. It is found in the nuclear pore complex. The protein localises to the nucleus membrane. Functionally, component of the nuclear pore complex (NPC), which plays a key role in de novo assembly and insertion of NPC in the nuclear envelope. The protein is Nucleoporin ndc-1 (npp-22) of Caenorhabditis briggsae.